A 501-amino-acid polypeptide reads, in one-letter code: Glutamate--tRNA ligase (501 aa).

The 'HIGH' region signature appears at 11 to 21 (PSPTGALHIGG). The 'KMSKS' region motif lies at 260–264 (KLSKR). Position 263 (lysine 263) interacts with ATP.

The protein belongs to the class-I aminoacyl-tRNA synthetase family. Glutamate--tRNA ligase type 1 subfamily. In terms of assembly, monomer.

The protein localises to the cytoplasm. It carries out the reaction tRNA(Glu) + L-glutamate + ATP = L-glutamyl-tRNA(Glu) + AMP + diphosphate. In terms of biological role, catalyzes the attachment of glutamate to tRNA(Glu) in a two-step reaction: glutamate is first activated by ATP to form Glu-AMP and then transferred to the acceptor end of tRNA(Glu). The chain is Glutamate--tRNA ligase from Flavobacterium psychrophilum (strain ATCC 49511 / DSM 21280 / CIP 103535 / JIP02/86).